The sequence spans 239 residues: Small ribosomal subunit protein eS4 (239 aa).

Residues 37 to 99 (IPLAVVIRDY…ADLYFRVIPD (63 aa)) form the S4 RNA-binding domain.

The protein belongs to the eukaryotic ribosomal protein eS4 family.

The chain is Small ribosomal subunit protein eS4 from Saccharolobus islandicus (strain Y.N.15.51 / Yellowstone #2) (Sulfolobus islandicus).